The following is a 133-amino-acid chain: ATP synthase epsilon chain (133 aa).

The protein belongs to the ATPase epsilon chain family. F-type ATPases have 2 components, CF(1) - the catalytic core - and CF(0) - the membrane proton channel. CF(1) has five subunits: alpha(3), beta(3), gamma(1), delta(1), epsilon(1). CF(0) has three main subunits: a, b and c.

It is found in the cell membrane. In terms of biological role, produces ATP from ADP in the presence of a proton gradient across the membrane. In Clostridium perfringens (strain SM101 / Type A), this protein is ATP synthase epsilon chain.